A 379-amino-acid polypeptide reads, in one-letter code: Intracellular hyaluronan-binding protein 4.S (379 aa).

Disordered regions lie at residues 52-260 (THRK…FSQE) and 332-379 (SLAR…PALA). Positions 71–81 (GKKESQKDRKA) are enriched in basic and acidic residues. Polar residues predominate over residues 107–116 (KVTQNENVDS). 2 stretches are compositionally biased toward basic and acidic residues: residues 118–133 (VKVDRTERRTAFREVR) and 139–158 (RSAEYSIEKPMEIMDQDKQM). Residues 162-174 (GGRGGMRGRGRGG) show a composition bias toward gly residues. Residues 179 to 208 (TESDNLRGKREFDRHSGSDRARMRPEDKRG) are compositionally biased toward basic and acidic residues. Composition is skewed to acidic residues over residues 232–241 (EQVETTETEA) and 368–379 (NPDDPEDFPALA).

It belongs to the SERBP1-HABP4 family. In terms of assembly, associates with ribosomes; promoting ribosome stabilization. Interacts with eef2/eEF2; promoting ribosome stabilization.

The protein localises to the nucleus. It localises to the cytoplasm. The protein resides in the stress granule. Its subcellular location is the nucleolus. It is found in the nucleus speckle. The protein localises to the cajal body. Ribosome-binding protein that promotes ribosome hibernation, a process during which ribosomes are stabilized in an inactive state and preserved from proteasomal degradation. Acts via its association with eef2/eEF2 factor at the A-site of the ribosome, promoting ribosome stabilization in an inactive state compatible with storage. Plays a key role in ribosome hibernation in the mature egg by promoting ribosome stabilization. Ribosomes, which are produced in large quantities during oogenesis, are stored and translationally repressed in the egg and early embryo. This chain is Intracellular hyaluronan-binding protein 4.S, found in Xenopus laevis (African clawed frog).